The sequence spans 578 residues: NADPH oxidase 4 (578 aa).

Topologically, residues 1–16 are cytoplasmic; it reads MALSWRSWLANEGVKH. The helical transmembrane segment at 17–37 threads the bilayer; that stretch reads LCLLVWLSLNVLLFWKTFLLY. At 38–62 the chain is on the extracellular side; that stretch reads NQGPEYYYIHQMLGLGLCLSRASAS. Positions 58 to 303 constitute a Ferric oxidoreductase domain; that stretch reads RASASVLNLN…YCAERLYRCI (246 aa). Residues 63–83 traverse the membrane as a helical segment; it reads VLNLNCSLILLPMCRTVLAYL. The Cytoplasmic segment spans residues 84–104; that stretch reads RGSQKVPSRRTRRLLDKSKTL. A helical transmembrane segment spans residues 105-125; that stretch reads HITCGITICIFSGVHVAAHLV. The Extracellular segment spans residues 126 to 154; sequence NALNFSVNYSEHFLALNAARYQNEDPRKL. The N-linked (GlcNAc...) asparagine glycan is linked to asparagine 133. A helical transmembrane segment spans residues 155 to 175; it reads LFTTVPGLTGVCMVVVLFLMV. Over 176–188 the chain is Cytoplasmic; that stretch reads TASTYAIRVSNYD. A helical membrane pass occupies residues 189-209; it reads IFWYTHNLFFVFYMLLLLHVS. Residues 210–424 lie on the Extracellular side of the membrane; that stretch reads GGLLKYQTNL…SPFEESLNYE (215 aa). An E-loop; essential for H2O2 generating catalytic activity region spans residues 218 to 273; sequence NLDTHPPGCISLNRTPSQNMSIADYVSEHFHGSLPGGFSKLEDHYQKTLVKICLEE. Residues 248-575 form a mediates interaction with TLR4 region; the sequence is HGSLPGGFSK…YGTKFEYNKE (328 aa). The FAD-binding FR-type domain occupies 304 to 419; sequence RSNKPVTIIS…DGPFGSPFEE (116 aa). Residues 425–445 traverse the membrane as a helical segment; the sequence is VSLCVAGGIGVTPFASILNTL. Topologically, residues 446–578 are cytoplasmic; that stretch reads LDDWKPYKLR…KFEYNKESFS (133 aa).

In terms of assembly, interacts with TLR4. Interacts with, relocalizes and stabilizes CYBA/p22phox. Interacts with protein disulfide isomerase. Interacts with PPP1R15A. Interacts with LRRC8A; this interaction prevents the ubiquitin-mediated degradation of LRRC8A. Heme is required as a cofactor. Post-translationally, N-glycosylation is required for the function. Expressed in vascular smooth muscle.

It is found in the cytoplasm. The protein localises to the endoplasmic reticulum membrane. It localises to the cell membrane. The protein resides in the cell junction. Its subcellular location is the focal adhesion. It is found in the nucleus. The enzyme catalyses NADPH + 2 O2 = 2 superoxide + NADP(+) + H(+). The catalysed reaction is NADPH + O2 + H(+) = H2O2 + NADP(+). With respect to regulation, activated by insulin. Inhibited by diphenylene iodonium. Inhibited by plumbagin. Activated by phorbol 12-myristate 13-acetate (PMA). Its function is as follows. NADPH oxidase that catalyzes predominantly the reduction of oxygen to H2O2. Can also catalyze to a smaller extent, the reduction of oxygen to superoxide. May function as an oxygen sensor regulating the KCNK3/TASK-1 potassium channel and HIF1A activity. May regulate insulin signaling cascade. May play a role in apoptosis, bone resorption and lipolysaccharide-mediated activation of NFKB. May produce superoxide in the nucleus and play a role in regulating gene expression upon cell stimulation. Promotes ferroptosis, reactive oxygen species production and reduced glutathione (GSH) levels by activating NLRP3 inflammasome activation and cytokine release. The protein is NADPH oxidase 4 (Nox4) of Rattus norvegicus (Rat).